The following is a 280-amino-acid chain: Dual adapter for phosphotyrosine and 3-phosphotyrosine and 3-phosphoinositide (280 aa).

The SH2 domain occupies 35-129 (WYHGNLTRHA…GTLMVLKHPY (95 aa)). Tyr139 carries the phosphotyrosine modification. At Ser141 the chain carries Phosphoserine. The PH domain maps to 164 to 259 (LGTKEGYLTK…WIKILRWKLS (96 aa)).

In terms of assembly, interacts with PtdIns(3,4,5)P3 and PLCG2. In terms of processing, phosphorylated on tyrosine residues.

The protein localises to the cytoplasm. Its subcellular location is the membrane. In terms of biological role, may act as a B-cell-associated adapter that regulates B-cell antigen receptor (BCR)-signaling downstream of PI3K. In Mus musculus (Mouse), this protein is Dual adapter for phosphotyrosine and 3-phosphotyrosine and 3-phosphoinositide (Dapp1).